Reading from the N-terminus, the 434-residue chain is MQVSVETTEGLGRRVNITVAADTIEQAVKSELVNVAKKVCIDGFRKGKVPMNIVAQRYGASVRQDVLGDLMQRNFVDAIIQEKINPVGAPNYVPGEYKTGEDFSYAVEFEVYPEVELMGLDTIEVEKPRVEVKDADVDTMLDTLQKQQADWKETTDAAGAEDRVTVDFTGTIDGEAFDGGKATDFVLAMGQGRMIPGFEEGVIGHKAGESFDISVTFPEDYHAENLKGKAAKFAVELKKVEQRELPELDEAFIKRFGVADVSLEGLRAEVRKNMERELKNAVRNRVKTQVIDGLLNANDIHVPAALVDGEIDVLKRQAAQRFGGNEKQALELPRELFEEQAKRRVKVGLLLGEVIRKHELKADEARVSALIEEMASAYEDPKEVIEFYGKNKELMDNMRNVALEEQAVEALLANSRVTEKETGFNELMNQPSAA.

The PPIase FKBP-type domain occupies 161 to 246 (EDRVTVDFTG…LKKVEQRELP (86 aa)).

Belongs to the FKBP-type PPIase family. Tig subfamily.

It is found in the cytoplasm. It catalyses the reaction [protein]-peptidylproline (omega=180) = [protein]-peptidylproline (omega=0). In terms of biological role, involved in protein export. Acts as a chaperone by maintaining the newly synthesized protein in an open conformation. Functions as a peptidyl-prolyl cis-trans isomerase. In Sodalis glossinidius (strain morsitans), this protein is Trigger factor.